Here is a 319-residue protein sequence, read N- to C-terminus: ATP-dependent 6-phosphofructokinase (319 aa).

Glycine 11 provides a ligand contact to ATP. An ADP-binding site is contributed by 21 to 25; it reads RAVVR. Residues 72–73 and 102–105 each bind ATP; these read RC and GDGS. Aspartate 103 contributes to the Mg(2+) binding site. 125–127 lines the substrate pocket; sequence TID. The Proton acceptor role is filled by aspartate 127. Residue arginine 154 coordinates ADP. Substrate is bound by residues arginine 162 and 169-171; that span reads MGR. ADP contacts are provided by residues 185–187, arginine 211, and 213–215; these read GAE and KKH. Residues glutamate 222, arginine 243, and 249-252 contribute to the substrate site; that span reads HMQR.

It belongs to the phosphofructokinase type A (PFKA) family. ATP-dependent PFK group I subfamily. Prokaryotic clade 'B1' sub-subfamily. In terms of assembly, homotetramer. It depends on Mg(2+) as a cofactor.

It is found in the cytoplasm. The enzyme catalyses beta-D-fructose 6-phosphate + ATP = beta-D-fructose 1,6-bisphosphate + ADP + H(+). It participates in carbohydrate degradation; glycolysis; D-glyceraldehyde 3-phosphate and glycerone phosphate from D-glucose: step 3/4. With respect to regulation, allosterically activated by ADP and other diphosphonucleosides, and allosterically inhibited by phosphoenolpyruvate. Its function is as follows. Catalyzes the phosphorylation of D-fructose 6-phosphate to fructose 1,6-bisphosphate by ATP, the first committing step of glycolysis. The protein is ATP-dependent 6-phosphofructokinase of Macrococcus caseolyticus (strain JCSC5402) (Macrococcoides caseolyticum).